A 273-amino-acid polypeptide reads, in one-letter code: Pantothenate synthetase (273 aa).

27–34 lines the ATP pocket; the sequence is MGALHNGH. The active-site Proton donor is the His34. Gln58 serves as a coordination point for (R)-pantoate. Position 58 (Gln58) interacts with beta-alanine. Position 144–147 (144–147) interacts with ATP; it reads GKKD. A (R)-pantoate-binding site is contributed by Gln150. Residues Val173 and 181-184 each bind ATP; that span reads LSSR.

It belongs to the pantothenate synthetase family. As to quaternary structure, homodimer.

Its subcellular location is the cytoplasm. It carries out the reaction (R)-pantoate + beta-alanine + ATP = (R)-pantothenate + AMP + diphosphate + H(+). Its pathway is cofactor biosynthesis; (R)-pantothenate biosynthesis; (R)-pantothenate from (R)-pantoate and beta-alanine: step 1/1. In terms of biological role, catalyzes the condensation of pantoate with beta-alanine in an ATP-dependent reaction via a pantoyl-adenylate intermediate. This chain is Pantothenate synthetase, found in Campylobacter fetus subsp. fetus (strain 82-40).